Consider the following 507-residue polypeptide: Polygalacturonase (507 aa).

An N-terminal signal peptide occupies residues 1 to 20 (MSMKFMAALAFLALQLIVMA). A propeptide spanning residues 21–54 (AGEDQSAQIMLDSDTKQYHRSSRNLRKRVHHARH) is cleaved from the precursor. PbH1 repeat units follow at residues 215–241 (CDGV…DIFA), 242–263 (SKRF…AVGT), 265–285 (SSNI…SIGS), 295–316 (VSFV…RIKT), 324–345 (ASHI…LINQ), and 358–385 (RSAV…QLMC). Residue Asp-256 is the Proton donor of the active site. Asn-267 carries N-linked (GlcNAc...) asparagine glycosylation. Residue His-279 is part of the active site.

The protein belongs to the glycosyl hydrolase 28 family.

Its subcellular location is the secreted. The protein localises to the cell wall. The enzyme catalyses (1,4-alpha-D-galacturonosyl)n+m + H2O = (1,4-alpha-D-galacturonosyl)n + (1,4-alpha-D-galacturonosyl)m.. This is Polygalacturonase (JNA2) from Juniperus ashei (Ozark white cedar).